The primary structure comprises 413 residues: S-adenosylmethionine synthase (413 aa).

Histidine 15 provides a ligand contact to ATP. Residue aspartate 17 coordinates Mg(2+). Glutamate 43 contacts K(+). L-methionine-binding residues include glutamate 56 and glutamine 100. Positions 100–110 (QSPDISQGVNE) are flexible loop. ATP contacts are provided by residues 171-173 (DGK), 248-249 (KF), aspartate 257, 263-264 (RK), alanine 280, and lysine 284. Aspartate 257 contacts L-methionine. Lysine 288 is an L-methionine binding site.

This sequence belongs to the AdoMet synthase family. As to quaternary structure, homotetramer; dimer of dimers. The cofactor is Mg(2+). K(+) serves as cofactor.

The protein localises to the cytoplasm. It catalyses the reaction L-methionine + ATP + H2O = S-adenosyl-L-methionine + phosphate + diphosphate. The protein operates within amino-acid biosynthesis; S-adenosyl-L-methionine biosynthesis; S-adenosyl-L-methionine from L-methionine: step 1/1. In terms of biological role, catalyzes the formation of S-adenosylmethionine (AdoMet) from methionine and ATP. The overall synthetic reaction is composed of two sequential steps, AdoMet formation and the subsequent tripolyphosphate hydrolysis which occurs prior to release of AdoMet from the enzyme. This Prochlorococcus marinus (strain AS9601) protein is S-adenosylmethionine synthase.